Consider the following 669-residue polypeptide: Beta-galactosidase (669 aa).

An N-terminal signal peptide occupies residues 1–24 (MDFPGAARLLSLLLVPLLLGPARG). Positions 25-29 (LRNAS) are excised as a propeptide. A glycan (N-linked (GlcNAc...) asparagine) is linked at asparagine 27. 3 residues coordinate substrate: tyrosine 84, glutamate 130, and asparagine 188. The Proton donor role is filled by glutamate 189. The cysteines at positions 196 and 231 are disulfide-linked. Asparagine 248 carries an N-linked (GlcNAc...) asparagine glycan. Glutamate 269 acts as the Nucleophile in catalysis. Residue tyrosine 334 coordinates substrate. 4 N-linked (GlcNAc...) asparagine glycosylation sites follow: asparagine 465, asparagine 499, asparagine 547, and asparagine 557. The cysteines at positions 628 and 636 are disulfide-linked. Positions 649 to 669 (TPTSSHPLPDLSDRDSGWDRV) are disordered. A compositionally biased stretch (basic and acidic residues) spans 659-669 (LSDRDSGWDRV).

This sequence belongs to the glycosyl hydrolase 35 family. Homodimer. May form higher multimers.

It is found in the lysosome. It catalyses the reaction Hydrolysis of terminal non-reducing beta-D-galactose residues in beta-D-galactosides.. Cleaves beta-linked terminal galactosyl residues from gangliosides, glycoproteins, and glycosaminoglycans. The chain is Beta-galactosidase (GLB1) from Felis catus (Cat).